The following is a 125-amino-acid chain: MYSDPYFAKPAPKSTGREYFNAGWLDKQLNKIPGIKPEDVQATLAELTALSVAEQVQLAGGCERLLVCGGGARNPLVMSRMSTLLPGTEVCVTDDFGVSGDDMEALHSPGWLFEPCPVNRVIYPQ.

The protein belongs to the anhydro-N-acetylmuramic acid kinase family.

This is an uncharacterized protein from Yersinia enterocolitica.